Reading from the N-terminus, the 271-residue chain is Dihydropteroate synthase type-2 (271 aa).

The 259-residue stretch at 1–259 (MNKSLIIFGI…EPRPLRDGLA (259 aa)) folds into the Pterin-binding domain. 4-aminobenzoate is bound at residue asparagine 12. Asparagine 12, phenylalanine 18, serine 51, and serine 52 together coordinate diphosphate. Position 12 (asparagine 12) interacts with Mg(2+). The 7,8-dihydropteroate site is built by serine 52, aspartate 85, asparagine 104, aspartate 174, phenylalanine 179, lysine 213, and serine 214. The (7,8-dihydropterin-6-yl)methyl diphosphate site is built by aspartate 85, asparagine 104, and aspartate 174. 6-hydroxymethyl-7,8-dihydropterin is bound by residues asparagine 104 and aspartate 174. Lysine 213 is a binding site for (7,8-dihydropterin-6-yl)methyl diphosphate. Lysine 213 contributes to the 6-hydroxymethyl-7,8-dihydropterin binding site. A 4-aminobenzoate-binding site is contributed by arginine 247. Diphosphate contacts are provided by arginine 247 and histidine 249. 247 to 249 (RTH) is a (7,8-dihydropterin-6-yl)methyl diphosphate binding site.

This sequence belongs to the DHPS family. As to quaternary structure, homodimer. Mg(2+) is required as a cofactor.

The enzyme catalyses (7,8-dihydropterin-6-yl)methyl diphosphate + 4-aminobenzoate = 7,8-dihydropteroate + diphosphate. It functions in the pathway cofactor biosynthesis; tetrahydrofolate biosynthesis; 7,8-dihydrofolate from 2-amino-4-hydroxy-6-hydroxymethyl-7,8-dihydropteridine diphosphate and 4-aminobenzoate: step 1/2. Functionally, catalyzes the condensation of para-aminobenzoate (pABA) with 6-hydroxymethyl-7,8-dihydropterin diphosphate (DHPt-PP) to form 7,8-dihydropteroate (H2Pte), the immediate precursor of folate derivatives. Confers resistance to sulfonamide antibiotics, including sulfamethoxazole (SMX), sulfadiazine and sulfisoxazole. The type II enzyme is stable whereas type I DHPS loses its activity rapidly. The chain is Dihydropteroate synthase type-2 from Escherichia coli.